Consider the following 160-residue polypeptide: Nucleotide-binding protein VC_1508 (160 aa).

Belongs to the YajQ family.

Nucleotide-binding protein. The sequence is that of Nucleotide-binding protein VC_1508 from Vibrio cholerae serotype O1 (strain ATCC 39315 / El Tor Inaba N16961).